We begin with the raw amino-acid sequence, 306 residues long: MNSSPITQVSNPNDSLNHSSTNLIPSSHNSLNNYPQKSVKGNRKKKGSIINKLFCCFVPSNDQNNGNNINTDNGASNNDKLQQQKQYNQQQQQQYNQHQQQQQQQQQQQQYINKDSSQQNGEIPLMVPMIPRHVGLKTLVLDLDETLVHSSFKPVHNPDFIVPVEIEGTIHQVYVVKRPFVDDFLRAIAEKFEIVVFTASLAKYADPVLDFLDTGRVIHYRLFRESCHNHKGNYVKDLSRLGRDLKSTIIVDNSPSSYLFHPENAIPIDSWFDDKDDRELLDLLPLLDDLIKVEDVRLVLDESRNN.

The segment covering 1 to 36 (MNSSPITQVSNPNDSLNHSSTNLIPSSHNSLNNYPQ) has biased composition (polar residues). Disordered stretches follow at residues 1–45 (MNSS…NRKK) and 61–116 (NDQN…NKDS). Residues 61–111 (NDQNNGNNINTDNGASNNDKLQQQKQYNQQQQQQYNQHQQQQQQQQQQQQY) show a composition bias toward low complexity. An FCP1 homology domain is found at 132-290 (RHVGLKTLVL…LDLLPLLDDL (159 aa)). Catalysis depends on Asp-142, which acts as the 4-aspartylphosphate intermediate. 3 residues coordinate Mg(2+): Asp-142, Asp-144, and Asn-253. Asp-144 acts as the Proton donor in catalysis.

Monomer. Mg(2+) is required as a cofactor.

Its subcellular location is the nucleus. It carries out the reaction O-phospho-L-seryl-[protein] + H2O = L-seryl-[protein] + phosphate. The catalysed reaction is O-phospho-L-threonyl-[protein] + H2O = L-threonyl-[protein] + phosphate. Its function is as follows. May function as a phosphatase involved in the regulation of cell growth and differentiation. In Dictyostelium discoideum (Social amoeba), this protein is Probable C-terminal domain small phosphatase (fcpA).